Here is a 106-residue protein sequence, read N- to C-terminus: Ferredoxin-2 (106 aa).

2 consecutive 4Fe-4S ferredoxin-type domains span residues 2–29 (YVVTENCIKCKYQDCVEVCPVDCFYEGE) and 30–59 (NFLVINPDECIDCGVCNPECPAEAIAGKWL). Residues cysteine 8 and cysteine 16 each coordinate [3Fe-4S] cluster. [4Fe-4S] cluster is bound by residues cysteine 20, cysteine 39, cysteine 42, and cysteine 45. Cysteine 49 provides a ligand contact to [3Fe-4S] cluster. The segment at 80–106 (ADADDWKDKPDKTGLLSENPGKGTVCH) is disordered.

It depends on [4Fe-4S] cluster as a cofactor. [3Fe-4S] cluster is required as a cofactor.

Ferredoxins are iron-sulfur proteins that transfer electrons in a wide variety of metabolic reactions. This chain is Ferredoxin-2, found in Rhodospirillum rubrum.